Reading from the N-terminus, the 325-residue chain is uncharacterized protein (325 aa).

Residues 296-325 (QRTLSSSMEEADRPRRMSVTQPHLPPVPSA) are disordered.

This sequence belongs to the NDRG family.

This is an uncharacterized protein from Caenorhabditis elegans.